Reading from the N-terminus, the 210-residue chain is Small ribosomal subunit protein uS7 (210 aa).

Residues 1 to 22 show a composition bias toward acidic residues; it reads MSDEQPAEDETEEAAAESEDTQ. Residues 1–23 form a disordered region; it reads MSDEQPAEDETEEAAAESEDTQE.

Belongs to the universal ribosomal protein uS7 family. Part of the 30S ribosomal subunit. Contacts proteins S9 and S11.

Functionally, one of the primary rRNA binding proteins, it binds directly to 16S rRNA where it nucleates assembly of the head domain of the 30S subunit. Is located at the subunit interface close to the decoding center. This chain is Small ribosomal subunit protein uS7, found in Halobacterium salinarum (strain ATCC 29341 / DSM 671 / R1).